Here is a 276-residue protein sequence, read N- to C-terminus: Dermonecrotic toxin LarSicTox-alphaIB2c (276 aa).

Histidine 5 is an active-site residue. Positions 25 and 27 each coordinate Mg(2+). Histidine 41 acts as the Nucleophile in catalysis. Cystine bridges form between cysteine 45–cysteine 51 and cysteine 47–cysteine 190. A Mg(2+)-binding site is contributed by aspartate 85. Residue asparagine 253 is glycosylated (N-linked (GlcNAc...) asparagine).

This sequence belongs to the arthropod phospholipase D family. Class II subfamily. Requires Mg(2+) as cofactor. As to expression, expressed by the venom gland.

The protein localises to the secreted. It carries out the reaction an N-(acyl)-sphingosylphosphocholine = an N-(acyl)-sphingosyl-1,3-cyclic phosphate + choline. It catalyses the reaction an N-(acyl)-sphingosylphosphoethanolamine = an N-(acyl)-sphingosyl-1,3-cyclic phosphate + ethanolamine. The catalysed reaction is a 1-acyl-sn-glycero-3-phosphocholine = a 1-acyl-sn-glycero-2,3-cyclic phosphate + choline. The enzyme catalyses a 1-acyl-sn-glycero-3-phosphoethanolamine = a 1-acyl-sn-glycero-2,3-cyclic phosphate + ethanolamine. Functionally, dermonecrotic toxins cleave the phosphodiester linkage between the phosphate and headgroup of certain phospholipids (sphingolipid and lysolipid substrates), forming an alcohol (often choline) and a cyclic phosphate. This toxin acts on sphingomyelin (SM). It may also act on ceramide phosphoethanolamine (CPE), lysophosphatidylcholine (LPC) and lysophosphatidylethanolamine (LPE), but not on lysophosphatidylserine (LPS), and lysophosphatidylglycerol (LPG). It acts by transphosphatidylation, releasing exclusively cyclic phosphate products as second products. Induces dermonecrosis, hemolysis, increased vascular permeability, edema, inflammatory response, and platelet aggregation. The sequence is that of Dermonecrotic toxin LarSicTox-alphaIB2c from Loxosceles arizonica (Arizona brown spider).